A 3298-amino-acid polypeptide reads, in one-letter code: Protocadherin-16 (3298 aa).

A signal peptide spans 1–42; sequence MQKELGIVPSCPGMKSPRPHLLLPLLLLLLLLLGAGVPGAWG. 27 Cadherin domains span residues 43–143, 144–255, 256–362, 367–472, 474–578, 579–685, 686–790, 791–894, 895–1000, 1001–1111, 1112–1211, 1218–1324, 1333–1436, 1437–1546, 1547–1649, 1650–1751, 1752–1855, 1856–1960, 1965–2068, 2069–2171, 2172–2277, 2278–2376, 2377–2482, 2483–2602, 2603–2706, 2707–2813, and 2814–2933; these read QAGS…APAF, PQAR…APAF, NQSR…QPSM, LSAD…APAF, RQLY…EPQF, QRTF…PPQF, YPRE…PPIF, EQLQ…SPAF, PAPE…APRF, NSPT…DPTF, LAVA…SPTF, AGGG…PPDL, VPVV…APAF, ARDP…APVF, ASPS…APTF, QQQE…APTF, GSAH…APAF, PVPA…APTF, LRLR…GPRF, PRAS…APRF, LRPH…RPTI, PQPW…APAF, SQSL…APSF, TLSH…PPVF, TRAS…GPAF, PLNL…DPVF, and LAPA…APDL. Residues 43-2940 lie on the Extracellular side of the membrane; the sequence is QAGSLDLQID…PDLNLLLVGA (2898 aa). N-linked (GlcNAc...) asparagine glycosylation is found at asparagine 217, asparagine 256, and asparagine 402. The N-linked (GlcNAc...) asparagine glycan is linked to asparagine 584. Asparagine 1249 is a glycosylation site (N-linked (GlcNAc...) asparagine). Residue asparagine 1521 is glycosylated (N-linked (GlcNAc...) asparagine). The N-linked (GlcNAc...) asparagine glycan is linked to asparagine 1718. N-linked (GlcNAc...) asparagine glycosylation is present at asparagine 1996. The tract at residues 2065 to 2094 is disordered; the sequence is GPRFPRASSEATIRENAPPGTPIVSPRAVH. Residues asparagine 2361, asparagine 2428, and asparagine 2569 are each glycosylated (N-linked (GlcNAc...) asparagine). Asparagine 2761, asparagine 2792, and asparagine 2862 each carry an N-linked (GlcNAc...) asparagine glycan. A helical transmembrane segment spans residues 2941 to 2961; the sequence is VAASLGVVVVLALAALVLGLV. At 2962 to 3298 the chain is on the cytoplasmic side; that stretch reads RARSRKAEAA…EPPDDTELHI (337 aa). Residues 2986-3040 are disordered; it reads LQKLGREPPSPPPSEHLYHQTLPSYGGPGAGGPYPRGGSLDPSHSSGRGSAEAAE. Residues 3011-3020 show a composition bias toward gly residues; that stretch reads GGPGAGGPYP. A Phosphoserine modification is found at serine 3055. Disordered stretches follow at residues 3062–3082 and 3233–3298; these read ARGP…TSCE and ASHR…ELHI. 2 stretches are compositionally biased toward low complexity: residues 3244-3266 and 3276-3289; these read SLSS…ARSP and GPSA…SGLE.

As to quaternary structure, heterophilic interaction with FAT4; this interaction affects their respective protein levels. Expressed in fibroblasts but not in melanocytes or keratinocytes.

The protein resides in the cell membrane. Its function is as follows. Calcium-dependent cell-adhesion protein. Mediates functions in neuroprogenitor cell proliferation and differentiation. In the heart, has a critical role for proper morphogenesis of the mitral valve, acting in the regulation of cell migration involved in valve formation. The polypeptide is Protocadherin-16 (DCHS1) (Homo sapiens (Human)).